A 438-amino-acid polypeptide reads, in one-letter code: 3-phosphoshikimate 1-carboxyvinyltransferase (438 aa).

The 3-phosphoshikimate site is built by lysine 25, serine 26, and arginine 30. Lysine 25 provides a ligand contact to phosphoenolpyruvate. Residues glycine 99 and arginine 128 each contribute to the phosphoenolpyruvate site. 3-phosphoshikimate-binding residues include serine 173, glutamine 175, aspartate 325, and lysine 352. Glutamine 175 contacts phosphoenolpyruvate. Aspartate 325 (proton acceptor) is an active-site residue. Phosphoenolpyruvate contacts are provided by arginine 356 and arginine 398.

Belongs to the EPSP synthase family. In terms of assembly, monomer.

It is found in the cytoplasm. The catalysed reaction is 3-phosphoshikimate + phosphoenolpyruvate = 5-O-(1-carboxyvinyl)-3-phosphoshikimate + phosphate. Its pathway is metabolic intermediate biosynthesis; chorismate biosynthesis; chorismate from D-erythrose 4-phosphate and phosphoenolpyruvate: step 6/7. Catalyzes the transfer of the enolpyruvyl moiety of phosphoenolpyruvate (PEP) to the 5-hydroxyl of shikimate-3-phosphate (S3P) to produce enolpyruvyl shikimate-3-phosphate and inorganic phosphate. The sequence is that of 3-phosphoshikimate 1-carboxyvinyltransferase from Prochlorococcus marinus (strain MIT 9515).